A 238-amino-acid chain; its full sequence is Orotidine 5'-phosphate decarboxylase (238 aa).

Substrate-binding positions include D13, K35, 62–71 (DLKFHDIPNT), T121, R182, Q191, G211, and R212. The active-site Proton donor is K64.

This sequence belongs to the OMP decarboxylase family. Type 1 subfamily. As to quaternary structure, homodimer.

The catalysed reaction is orotidine 5'-phosphate + H(+) = UMP + CO2. Its pathway is pyrimidine metabolism; UMP biosynthesis via de novo pathway; UMP from orotate: step 2/2. Catalyzes the decarboxylation of orotidine 5'-monophosphate (OMP) to uridine 5'-monophosphate (UMP). The chain is Orotidine 5'-phosphate decarboxylase from Saccharophagus degradans (strain 2-40 / ATCC 43961 / DSM 17024).